The chain runs to 614 residues: MIKKASLLTACSVTAFSAWAQDTSPDTLVVTANRFEQPRSTVLAPTTVVTRQDIDRWQSTSVNDVLRRLPGVDITQNGGSGQLSSIFIRGTNASHVLVLIDGVRLNLAGVSGSADLSQFPIALVQRVEYIRGPRSAVYGSDAIGGVVNIITTRDHPGTEISAGWGSNSYQNYDVSTQQQLGDKTRVTLLGDYAHTHGYDVVAYGNTGTQAQPDNDGFLSKTLYGALEHNFTDAWSGFVRGYGYDNRTNYDAYYSPGLPLVDTRKLYSQSWDAGLRYNGELIKSQLITSYSHSKDYNYDPHYGRYDSSATLDEMKQYTVQWANNIIIGHGNIGAGVDWQKQSTAPGTAYVEDGYDQRNTGIYLTGLQQVGDFTFEGAGRSDDNSQFGRHGTWQTSAGWEFIEGYRFIASYGTSYKAPNLGQLYGSYGNPNLNPEKSKQWEGAFEGLTAGVNWRISGYRNDVSDLIDYDDHTLKYYNEGKARIKGVEATANFDTGPLTHTVSYDYVDARNAITDTPLLRRAKQQVKYQLDWQLYDFDWGITYQYLGTRYDKDYSSYPYQTVKMGGVSLWDLAVAYPVTSHLTVRGKIANLFDKDYETVYGYQTAGREYTLXGSYTF.

Positions 1 to 20 (MIKKASLLTACSVTAFSAWA) are cleaved as a signal peptide. The TonB box motif lies at 26 to 33 (DTLVVTAN). The region spanning 38–152 (PRSTVLAPTT…IGGVVNIITT (115 aa)) is the TBDR plug domain. Residues L83, S85, N92, and 110–111 (VS) contribute to the cyanocob(III)alamin site. The TBDR beta-barrel domain maps to 155 to 614 (HPGTEISAGW…EYTLXGSYTF (460 aa)). 3 beta stranded membrane-spanning segments follow: residues 158 to 165 (TEISAGWG), 169 to 178 (YQNYDVSTQQ), and 184 to 195 (TRVTLLGDYAHT). The Ca(2+) site is built by D199, Q211, D213, and D215. Beta stranded transmembrane passes span 217-227 (FLSKTLYGALE) and 232-248 (DAWSGFVRGYGYDNRTN). The Ca(2+) site is built by Y249 and D250. A251 provides a ligand contact to cyanocob(III)alamin. D261 contacts Ca(2+). 14 consecutive transmembrane segments (beta stranded) span residues 263-277 (RKLYSQSWDAGLRYN), 279-296 (ELIKSQLITSYSHSKDYN), 309-325 (TLDEMKQYTVQWANNII), 328-337 (HGNIGAGVDW), 353-369 (YDQRNTGIYLTGLQQVG), 371-381 (FTFEGAGRSDD), 385-400 (FGRHGTWQTSAGWEFI), 403-417 (YRFIASYGTSYKAPN), 434-443 (KSKQWEGAFE), 449-458 (VNWRISGYRN), 473-490 (YYNEGKARIKGVEATANF), 494-509 (PLTHTVSYDYVDARNA), 517-529 (RRAKQQVKYQLDW), and 535-550 (DWGITYQYLGTRYDKD). Cyanocob(III)alamin is bound at residue T309. R517 contributes to the cyanocob(III)alamin binding site. Y551 contributes to the cyanocob(III)alamin binding site. Transmembrane regions (beta stranded) follow at residues 558 to 572 (TVKMGGVSLWDLAVA), 585 to 596 (IANLFDKDYETV), and 602 to 614 (AGREYTLXGSYTF). A TonB C-terminal box motif is present at residues 597–614 (YGYQTAGREYTLXGSYTF).

This sequence belongs to the TonB-dependent receptor family. BtuB (TC 1.B.14.3.1) subfamily.

The protein resides in the cell outer membrane. Its function is as follows. Involved in the active translocation of vitamin B12 (cyanocobalamin) across the outer membrane to the periplasmic space. It derives its energy for transport by interacting with the trans-periplasmic membrane protein TonB. This chain is Vitamin B12 transporter BtuB, found in Escherichia coli O6:H1 (strain CFT073 / ATCC 700928 / UPEC).